A 308-amino-acid polypeptide reads, in one-letter code: GTPase Era (308 aa).

One can recognise an Era-type G domain in the interval 14 to 181 (RCGFVALIGA…RSTLAEMVPP (168 aa)). The G1 stretch occupies residues 22–29 (GAPNVGKS). 22–29 (GAPNVGKS) provides a ligand contact to GTP. Residues 48–52 (QTTRA) are G2. The tract at residues 69-72 (DTPG) is G3. GTP is bound by residues 69-73 (DTPGI) and 131-134 (NKVD). The interval 131–134 (NKVD) is G4. The interval 160–162 (IAA) is G5. Positions 212 to 289 (LHQELPYQST…HLFLFVKVRE (78 aa)) constitute a KH type-2 domain.

The protein belongs to the TRAFAC class TrmE-Era-EngA-EngB-Septin-like GTPase superfamily. Era GTPase family. As to quaternary structure, monomer.

Its subcellular location is the cytoplasm. The protein localises to the cell inner membrane. Functionally, an essential GTPase that binds both GDP and GTP, with rapid nucleotide exchange. Plays a role in 16S rRNA processing and 30S ribosomal subunit biogenesis and possibly also in cell cycle regulation and energy metabolism. The sequence is that of GTPase Era from Bradyrhizobium diazoefficiens (strain JCM 10833 / BCRC 13528 / IAM 13628 / NBRC 14792 / USDA 110).